The chain runs to 118 residues: Large ribosomal subunit protein bL20 (118 aa).

It belongs to the bacterial ribosomal protein bL20 family.

Functionally, binds directly to 23S ribosomal RNA and is necessary for the in vitro assembly process of the 50S ribosomal subunit. It is not involved in the protein synthesizing functions of that subunit. The chain is Large ribosomal subunit protein bL20 from Bacillus cytotoxicus (strain DSM 22905 / CIP 110041 / 391-98 / NVH 391-98).